A 1060-amino-acid polypeptide reads, in one-letter code: RNA-binding protein 27 (1060 aa).

Basic and acidic residues-rich tracts occupy residues 91–102 and 124–143; these read LVQEKEEIKEEV and TRSE…DGKW. Disordered stretches follow at residues 91-143 and 162-235; these read LVQE…DGKW and WRRG…GAQS. Residues 165 to 185 are compositionally biased toward basic residues; it reads GRSKSRSKSRGLSRSRSRSRG. A compositionally biased stretch (basic and acidic residues) spans 186–211; sequence RSKDRDPNRNVEHRERSKFKSERNDL. Residues 225 to 235 are compositionally biased toward polar residues; it reads SSEQYSSGAQS. The C3H1-type zinc-finger motif lies at 273 to 301; that stretch reads LPPKRRCRDYDERGFCVLGDLCQFDHGND. Composition is skewed to pro residues over residues 319–356 and 371–384; these read PPPG…PGPG and QPPP…PRPP. The tract at residues 319 to 412 is disordered; sequence PPPGLPPPPP…PNLASVGTRL (94 aa). Over residues 386–402 the composition is skewed to polar residues; sequence TQSSLINSRDQPGTSAV. The residue at position 447 (Thr-447) is a Phosphothreonine. The residue at position 455 (Arg-455) is an Omega-N-methylarginine. Positions 565-592 are disordered; it reads MSGLEGPLTKKPWLGKQGNNNQNKPGFL. The segment covering 579-588 has biased composition (low complexity); the sequence is GKQGNNNQNK. The RRM domain maps to 600–674; the sequence is TKLEVKKIPQ…RFIRVLWHRE (75 aa). Residues 809–886 are a coiled coil; it reads VQEVLKKKQE…KDELKTSSAV (78 aa). Phosphoserine is present on Ser-927. Disordered regions lie at residues 940-968 and 1006-1060; these read PVGR…SLNH and DRRL…SWRR. Phosphoserine is present on residues Ser-1012 and Ser-1020. Positions 1024-1053 are enriched in acidic residues; that stretch reads ETEEEEVKEEETETSDLFLPDDDDEDEDEY.

The protein localises to the cytoplasm. The protein resides in the nucleus speckle. May be involved in the turnover of nuclear polyadenylated (pA+) RNA. The polypeptide is RNA-binding protein 27 (Homo sapiens (Human)).